The chain runs to 486 residues: Chromosomal replication initiator protein DnaA (486 aa).

Positions 1–79 are domain I, interacts with DnaA modulators; the sequence is MEKSKNIWSL…GYNNIVIVFT (79 aa). Residues 79–141 form a domain II region; sequence TNQPPKTHSN…EEEPTNFKNP (63 aa). The segment at 142 to 358 is domain III, AAA+ region; sequence FLKKRYTFEN…AAVTKLKAYI (217 aa). The ATP site is built by G186, G188, K189, and T190. The domain IV, binds dsDNA stretch occupies residues 359 to 486; that stretch reads DLDNIEIDIE…TELMNKIKKN (128 aa).

It belongs to the DnaA family. Oligomerizes as a right-handed, spiral filament on DNA at oriC.

The protein localises to the cytoplasm. Plays an essential role in the initiation and regulation of chromosomal replication. ATP-DnaA binds to the origin of replication (oriC) to initiate formation of the DNA replication initiation complex once per cell cycle. Binds the DnaA box (a 9 base pair repeat at the origin) and separates the double-stranded (ds)DNA. Forms a right-handed helical filament on oriC DNA; dsDNA binds to the exterior of the filament while single-stranded (ss)DNA is stabiized in the filament's interior. The ATP-DnaA-oriC complex binds and stabilizes one strand of the AT-rich DNA unwinding element (DUE), permitting loading of DNA polymerase. After initiation quickly degrades to an ADP-DnaA complex that is not apt for DNA replication. Binds acidic phospholipids. Its function is as follows. Binds to the bpuR promoter, possibly at 5'-TTTTTAAA-3'. This is Chromosomal replication initiator protein DnaA from Borreliella burgdorferi (strain ATCC 35210 / DSM 4680 / CIP 102532 / B31) (Borrelia burgdorferi).